A 360-amino-acid chain; its full sequence is DNA ADP-ribosyl glycohydrolase (360 aa).

The Macro domain occupies 1–155 (MLRFVRGNLL…VYEPVENPKA (155 aa)). Residues 8-9 (NL), 20-22 (TVN), 31-34 (VALQ), and T79 contribute to the ADP-D-ribose site. The Nucleophile role is filled by K80. 117-121 (GAGNG) provides a ligand contact to ADP-D-ribose. The tract at residues 167-338 (LTPARAALLK…VALDALLKRG (172 aa)) is interaction with DarT.

Belongs to the DarG ADP-ribosyl glycohydrolase family. As to quaternary structure, interacts (via C-terminus) with cognate toxin DarT; this heterodimeric complex neutralizes the toxic effect of DarT by preventing ssDNA binding to DarT and consequently inactivating the toxin by direct protein-protein interactions.

It catalyses the reaction an N-(ADP-alpha-D-ribosyl)-thymidine in DNA + H2O = a thymidine in DNA + ADP-D-ribose. Antitoxin component of the hybrid type II/IV toxin-antitoxin (TA) system DarTG, which plays a crucial role in controlling bacterial growth and bacteriophage infection. De-ADP-ribosylates DNA modified on thymidine by its cognate toxin DarT, which neutralizes the activity of cognate toxin DarT. Upon expression in E.coli neutralizes the effect of cognate toxin DarT. Upon expression in M.tuberculosis neutralizes the toxic effects of endogenous DarT. The sequence is that of DNA ADP-ribosyl glycohydrolase from Thermus aquaticus (strain ATCC BAA-2747 / Y51MC23).